The sequence spans 96 residues: Putative pterin-4-alpha-carbinolamine dehydratase (96 aa).

This sequence belongs to the pterin-4-alpha-carbinolamine dehydratase family.

It carries out the reaction (4aS,6R)-4a-hydroxy-L-erythro-5,6,7,8-tetrahydrobiopterin = (6R)-L-erythro-6,7-dihydrobiopterin + H2O. The protein is Putative pterin-4-alpha-carbinolamine dehydratase of Herpetosiphon aurantiacus (strain ATCC 23779 / DSM 785 / 114-95).